The sequence spans 626 residues: Phosphomethylpyrimidine synthase (626 aa).

A disordered region spans residues 1–22 (MTKQEKAINLSESAQVDQQSVQ). Residues 10 to 22 (LSESAQVDQQSVQ) are compositionally biased toward polar residues. Substrate-binding positions include Asn-232, Met-261, Tyr-290, His-326, 346–348 (SRG), 387–390 (DGLR), and Glu-426. His-430 lines the Zn(2+) pocket. Tyr-453 provides a ligand contact to substrate. Zn(2+) is bound at residue His-494. Cys-574, Cys-577, and Cys-582 together coordinate [4Fe-4S] cluster.

It belongs to the ThiC family. As to quaternary structure, homodimer. It depends on [4Fe-4S] cluster as a cofactor.

The catalysed reaction is 5-amino-1-(5-phospho-beta-D-ribosyl)imidazole + S-adenosyl-L-methionine = 4-amino-2-methyl-5-(phosphooxymethyl)pyrimidine + CO + 5'-deoxyadenosine + formate + L-methionine + 3 H(+). It participates in cofactor biosynthesis; thiamine diphosphate biosynthesis. Catalyzes the synthesis of the hydroxymethylpyrimidine phosphate (HMP-P) moiety of thiamine from aminoimidazole ribotide (AIR) in a radical S-adenosyl-L-methionine (SAM)-dependent reaction. This is Phosphomethylpyrimidine synthase from Pseudomonas putida (strain GB-1).